Reading from the N-terminus, the 456-residue chain is RUN domain-containing protein 3B (456 aa).

A disordered region spans residues 1–24 (MASRSLGGLSGIRGGGGGGGKKSL). Residues 8-21 (GLSGIRGGGGGGGK) are compositionally biased toward gly residues. R13 bears the Omega-N-methylarginine mark. One can recognise an RUN domain in the interval 57–189 (DDSSPEFNNF…IDFSFCLKGE (133 aa)). A phosphoserine mark is found at S215 and S216. The disordered stretch occupies residues 216-237 (SDEEELRTLGSSGSESSTPENV). The span at 224 to 235 (LGSSGSESSTPE) shows a compositional bias: polar residues. Positions 300-325 (AHKLEKEQLEYIIVELQDQLTVLKNN) form a coiled coil. The span at 382 to 405 (SLSQTSLDPGQSQEGDGKQDTLNV) shows a compositional bias: polar residues. The interval 382 to 411 (SLSQTSLDPGQSQEGDGKQDTLNVMSEGKE) is disordered.

This sequence belongs to the RUNDC3 family. In terms of assembly, interacts with RAP2A.

This Pongo abelii (Sumatran orangutan) protein is RUN domain-containing protein 3B (RUNDC3B).